Consider the following 417-residue polypeptide: D-amino acid dehydrogenase (417 aa).

3–17 serves as a coordination point for FAD; it reads AVVLGSGVVGLMSAW.

This sequence belongs to the DadA oxidoreductase family. FAD serves as cofactor.

It carries out the reaction a D-alpha-amino acid + A + H2O = a 2-oxocarboxylate + AH2 + NH4(+). Its function is as follows. Oxidative deamination of D-amino acids. This Vibrio vulnificus (strain CMCP6) protein is D-amino acid dehydrogenase.